A 442-amino-acid polypeptide reads, in one-letter code: MEPKFHAFMFPWFAFGHMIPFLHLANKLAEKGHRVTFLLPKKAQKQLEHHNLFPDSIVFHPLTVPPVNGLPAGAETTSDIPISLDNLLSKALDLTRDQVEAAVRALRPDLIFFDFAQWIPDMAKEHMIKSVSYIIVSATTIAHTHVPGGKLGVRPPGYPSSKVMFRENDVHALATLSIFYKRLYHQITTGLKSCDVIALRTCKEVEGMFCDFISRQYHKKVLLTGPMFPEPDTSKPLEERWNHFLSGFAPKSVVFCSPGSQVILEKDQFQELCLGMELTGLPFLLAVKPPRGSSTVQEGLPEGFEERVKDRGVVWGGWVQQPLILAHPSIGCFVNHCGPGTIWESLVSDCQMVLIPFLSDQVLFTRLMTEEFEVSVEVPREKTGWFSKESLSNAIKSVMDKDSDIGKLVRSNHTKLKEILVSPGLLTGYVDHFVEGLQENLI.

UDP-alpha-D-glucose is bound by residues Ser-260, 319–321 (VQQ), 336–344 (HCGPGTIWE), and 358–361 (LSDQ).

It belongs to the UDP-glycosyltransferase family.

The polypeptide is UDP-glycosyltransferase 79B7 (UGT79B7) (Arabidopsis thaliana (Mouse-ear cress)).